Reading from the N-terminus, the 163-residue chain is Endoribonuclease YbeY (163 aa).

Zn(2+)-binding residues include histidine 121, histidine 125, and histidine 131.

The protein belongs to the endoribonuclease YbeY family. Requires Zn(2+) as cofactor.

The protein resides in the cytoplasm. Functionally, single strand-specific metallo-endoribonuclease involved in late-stage 70S ribosome quality control and in maturation of the 3' terminus of the 16S rRNA. This Synechococcus sp. (strain JA-2-3B'a(2-13)) (Cyanobacteria bacterium Yellowstone B-Prime) protein is Endoribonuclease YbeY.